Consider the following 60-residue polypeptide: Metallothionein B (60 aa).

The tract at residues 1-28 (MDPCECSKTGSCNCGGSCKCSNCACTSC) is beta. 20 residues coordinate a divalent metal cation: C4, C6, C12, C14, C18, C20, C23, C25, C28, C32, C33, C35, C36, C40, C43, C47, C49, C54, C58, and C59. Residues 29-60 (KKSCCPCCPSDCSKCASGCVCKGKTCDTSCCQ) form an alpha region.

The protein belongs to the metallothionein superfamily. Type 1 family.

Functionally, metallothioneins have a high content of cysteine residues that bind various heavy metals. The protein is Metallothionein B (mtb) of Oncorhynchus mykiss (Rainbow trout).